A 295-amino-acid chain; its full sequence is Protease HtpX homolog (295 aa).

2 helical membrane passes run 6 to 26 (IGLF…VTSV) and 40 to 60 (LSSL…VSLL). Residue His-148 coordinates Zn(2+). Residue Glu-149 is part of the active site. His-152 provides a ligand contact to Zn(2+). 2 consecutive transmembrane segments (helical) span residues 163–183 (LIQG…SYAL) and 198–218 (ISNI…VAYF). Position 223 (Glu-223) interacts with Zn(2+).

The protein belongs to the peptidase M48B family. The cofactor is Zn(2+).

The protein localises to the cell inner membrane. The sequence is that of Protease HtpX homolog from Leptospira borgpetersenii serovar Hardjo-bovis (strain JB197).